The following is a 550-amino-acid chain: Dihydroxy-acid dehydratase (550 aa).

D78 contacts Mg(2+). C119 provides a ligand contact to [2Fe-2S] cluster. Mg(2+) is bound by residues D120 and K121. K121 bears the N6-carboxylysine mark. C192 is a binding site for [2Fe-2S] cluster. Mg(2+) is bound at residue E440. Catalysis depends on S466, which acts as the Proton acceptor.

It belongs to the IlvD/Edd family. As to quaternary structure, homodimer. [2Fe-2S] cluster serves as cofactor. Requires Mg(2+) as cofactor.

It carries out the reaction (2R)-2,3-dihydroxy-3-methylbutanoate = 3-methyl-2-oxobutanoate + H2O. The catalysed reaction is (2R,3R)-2,3-dihydroxy-3-methylpentanoate = (S)-3-methyl-2-oxopentanoate + H2O. It functions in the pathway amino-acid biosynthesis; L-isoleucine biosynthesis; L-isoleucine from 2-oxobutanoate: step 3/4. Its pathway is amino-acid biosynthesis; L-valine biosynthesis; L-valine from pyruvate: step 3/4. In terms of biological role, functions in the biosynthesis of branched-chain amino acids. Catalyzes the dehydration of (2R,3R)-2,3-dihydroxy-3-methylpentanoate (2,3-dihydroxy-3-methylvalerate) into 2-oxo-3-methylpentanoate (2-oxo-3-methylvalerate) and of (2R)-2,3-dihydroxy-3-methylbutanoate (2,3-dihydroxyisovalerate) into 2-oxo-3-methylbutanoate (2-oxoisovalerate), the penultimate precursor to L-isoleucine and L-valine, respectively. This chain is Dihydroxy-acid dehydratase, found in Thermodesulfovibrio yellowstonii (strain ATCC 51303 / DSM 11347 / YP87).